The chain runs to 206 residues: Regulatory protein CysR (206 aa).

One can recognise an HTH crp-type domain in the interval 120–196 (RRAEAKLASL…DRALIVRYPE (77 aa)). The H-T-H motif DNA-binding region spans 156 to 175 (HQVIAELSGSTRVTTTRLLG).

The protein resides in the cytoplasm. Its function is as follows. Probably regulates the expression of genes from the sulfate permease complex. This Synechococcus elongatus (strain ATCC 33912 / PCC 7942 / FACHB-805) (Anacystis nidulans R2) protein is Regulatory protein CysR (cysR).